The primary structure comprises 318 residues: Probable tyrosine phosphatase protein N1 (318 aa).

In terms of domain architecture, Tyrosine-protein phosphatase spans 26–292; it reads IVRLEHHQVI…LILQPGYYVL (267 aa). Cysteine 233 (phosphocysteine intermediate) is an active-site residue.

Belongs to the protein-tyrosine phosphatase family.

The catalysed reaction is O-phospho-L-tyrosyl-[protein] + H2O = L-tyrosyl-[protein] + phosphate. The chain is Probable tyrosine phosphatase protein N1 (N3) from Microplitis demolitor bracovirus (isolate Webb) (MdBV).